The sequence spans 1328 residues: DNA-directed RNA polymerase subunit beta (1328 aa).

This sequence belongs to the RNA polymerase beta chain family. As to quaternary structure, the RNAP catalytic core consists of 2 alpha, 1 beta, 1 beta' and 1 omega subunit. When a sigma factor is associated with the core the holoenzyme is formed, which can initiate transcription.

The enzyme catalyses RNA(n) + a ribonucleoside 5'-triphosphate = RNA(n+1) + diphosphate. Functionally, DNA-dependent RNA polymerase catalyzes the transcription of DNA into RNA using the four ribonucleoside triphosphates as substrates. This chain is DNA-directed RNA polymerase subunit beta, found in Karelsulcia muelleri (strain GWSS) (Sulcia muelleri).